A 331-amino-acid polypeptide reads, in one-letter code: 6-phosphogluconolactonase (331 aa).

This sequence belongs to the cycloisomerase 2 family.

The enzyme catalyses 6-phospho-D-glucono-1,5-lactone + H2O = 6-phospho-D-gluconate + H(+). It functions in the pathway carbohydrate degradation; pentose phosphate pathway; D-ribulose 5-phosphate from D-glucose 6-phosphate (oxidative stage): step 2/3. Catalyzes the hydrolysis of 6-phosphogluconolactone to 6-phosphogluconate. This chain is 6-phosphogluconolactonase, found in Klebsiella pneumoniae subsp. pneumoniae (strain ATCC 700721 / MGH 78578).